The chain runs to 261 residues: 1-(5-phosphoribosyl)-5-[(5-phosphoribosylamino)methylideneamino] imidazole-4-carboxamide isomerase (261 aa).

Aspartate 15 functions as the Proton acceptor in the catalytic mechanism. The active-site Proton donor is the aspartate 136.

This sequence belongs to the HisA/HisF family.

It localises to the cytoplasm. It catalyses the reaction 1-(5-phospho-beta-D-ribosyl)-5-[(5-phospho-beta-D-ribosylamino)methylideneamino]imidazole-4-carboxamide = 5-[(5-phospho-1-deoxy-D-ribulos-1-ylimino)methylamino]-1-(5-phospho-beta-D-ribosyl)imidazole-4-carboxamide. Its pathway is amino-acid biosynthesis; L-histidine biosynthesis; L-histidine from 5-phospho-alpha-D-ribose 1-diphosphate: step 4/9. The chain is 1-(5-phosphoribosyl)-5-[(5-phosphoribosylamino)methylideneamino] imidazole-4-carboxamide isomerase from Synechococcus sp. (strain JA-3-3Ab) (Cyanobacteria bacterium Yellowstone A-Prime).